The primary structure comprises 557 residues: MHLASLLSSCSLLLLLGALPGWAANNDPIEKVIEGINRGLSSAEREVGKALEGINNGITQAGREVEKVFNGLSSMGNQAGKELEKGVQGLNRGLDKVAHGINNGVGHTGKEAEKLAHGVNHAAGQVGKEADTVIQGVPHGVNQAGSDAGRFGQGAHHATGQAGKEAEKFGQGAHHAAGQFGNEAEKFGQGAHHAAGQFGNEAEKFGQGVHHAAGQFGNEAEKFGQGVHHAAGQAGKEGEKIVQGVQHGVNQAGKEAEKFGQGVHHGAGQFGNEAEKFGQGVHHAAGQAGKEGEKIVQGVQHGVNQAGKEAEKFGQGVHHGAGQFGNEAEKFGQGVHHAAGQAGKEGEKIVQGVQHGVNQAGKEAEKFGKDVHYAAGQAGKEGEKIVQGVQHGVNQAGKEAEKFGQGVHHAAGQFGKEAEKFGQGAHHAAEQAGKQAGKVAQGVHDGVNQAGKEAEKLGHGVNHAAGQAGKEAEKLGQGVHHAAGQAGKQEDRLQQNVHNGVNQAGKEANQLLNDGHPGGSTTQHGGAATTTLTSGASVNKPFMALSVLWKSVTSIIP.

The signal sequence occupies residues 1–23 (MHLASLLSSCSLLLLLGALPGWA). Disordered regions lie at residues 150–175 (RFGQGAHHATGQAGKEAEKFGQGAHH), 422–441 (GQGAHHAAEQAGKQAGKVAQ), 464–490 (AAGQAGKEAEKLGQGVHHAAGQAGKQE), and 509–533 (NQLLNDGHPGGSTTQHGGAATTTLT). Over residues 153 to 175 (QGAHHATGQAGKEAEKFGQGAHH) the composition is skewed to low complexity. Residues 476 to 487 (GQGVHHAAGQAG) are compositionally biased toward low complexity.

The protein resides in the secreted. The chain is Suprabasin (SBSN) from Bos taurus (Bovine).